Reading from the N-terminus, the 100-residue chain is C-X-C motif chemokine 11 (100 aa).

Positions 1–21 are cleaved as a signal peptide; sequence MNRKVTAIALAAIIWATAAQG. 2 disulfides stabilise this stretch: cysteine 30–cysteine 57 and cysteine 32–cysteine 74.

Belongs to the intercrine alpha (chemokine CxC) family. Interacts with TNFAIP6 (via Link domain).

The protein resides in the secreted. In terms of biological role, chemotactic for interleukin-activated T-cells but not unstimulated T-cells, neutrophils or monocytes. Induces calcium release in activated T-cells. Binds to CXCR3. May play an important role in CNS diseases which involve T-cell recruitment. May play a role in skin immune responses. This Mus musculus (Mouse) protein is C-X-C motif chemokine 11 (Cxcl11).